We begin with the raw amino-acid sequence, 1358 residues long: Xanthine dehydrogenase/oxidase (1358 aa).

The 2Fe-2S ferredoxin-type domain occupies 8 to 95; it reads DELVFFVNGK…HVAVTTVEGI (88 aa). Residues cysteine 47, cysteine 52, cysteine 55, cysteine 77, cysteine 117, cysteine 120, cysteine 152, and cysteine 154 each contribute to the [2Fe-2S] cluster site. One can recognise an FAD-binding PCMH-type domain in the interval 255-440; that stretch reads FKGERVMWIQ…LSVEIPYSKE (186 aa). FAD-binding positions include 283–290, phenylalanine 363, 373–377, aspartate 386, leucine 430, and lysine 448; these read LVVGNTEV and ALGGN. Positions 796 and 827 each coordinate Mo-molybdopterin. 2 residues coordinate substrate: glutamate 831 and arginine 909. Arginine 941 lines the Mo-molybdopterin pocket. Residues phenylalanine 943 and threonine 1039 each contribute to the substrate site. Residue alanine 1108 participates in Mo-molybdopterin binding. Glutamate 1290 (proton acceptor) is an active-site residue.

The protein belongs to the xanthine dehydrogenase family. As to quaternary structure, homodimer. FAD serves as cofactor. Requires Mo-molybdopterin as cofactor. The cofactor is [2Fe-2S] cluster. As to expression, detected in liver (at protein level).

It is found in the peroxisome. The protein resides in the cytoplasm. The catalysed reaction is xanthine + NAD(+) + H2O = urate + NADH + H(+). It carries out the reaction hypoxanthine + NAD(+) + H2O = xanthine + NADH + H(+). It catalyses the reaction xanthine + O2 + H2O = urate + H2O2. Functionally, key enzyme in purine degradation. Catalyzes the oxidation of hypoxanthine to xanthine. Catalyzes the oxidation of xanthine to uric acid. Contributes to the generation of reactive oxygen species. The polypeptide is Xanthine dehydrogenase/oxidase (XDH) (Gallus gallus (Chicken)).